The primary structure comprises 1184 residues: von Willebrand factor A domain-containing protein 3A (1184 aa).

The first 24 residues, 1–24 (MKKYRKISIGCFAMATQTSHVFHG), serve as a signal peptide directing secretion. The disordered stretch occupies residues 40-62 (GRDSKKPLKQKNMNGLGQNSDNG). Over residues 50–62 (KNMNGLGQNSDNG) the composition is skewed to polar residues. A coiled-coil region spans residues 333 to 357 (TSRDMDELLAEIQKAQSLLSHVQAL). Residues 511–708 (RVVVLLDISA…SIMSEMEKAL (198 aa)) form the VWFA 1 domain. Residue asparagine 709 is glycosylated (N-linked (GlcNAc...) asparagine). The tract at residues 729–780 (LGSSALPKEKPKTLQLRSQPKKLCPPRPTVPLGARMSIKDDPDREKSPPLKS) is disordered. Residues 765–776 (SIKDDPDREKSP) show a composition bias toward basic and acidic residues. In terms of domain architecture, VWFA 2 spans 959–1131 (KVCILLDTSG…KIHSLLTKGF (173 aa)).

The protein localises to the secreted. The sequence is that of von Willebrand factor A domain-containing protein 3A (VWA3A) from Homo sapiens (Human).